We begin with the raw amino-acid sequence, 535 residues long: T-complex protein 1 subunit zeta 1 (535 aa).

The protein belongs to the TCP-1 chaperonin family. Heterooligomeric complex of about 850 to 900 kDa that forms two stacked rings, 12 to 16 nm in diameter.

It localises to the cytoplasm. Molecular chaperone; assists the folding of proteins upon ATP hydrolysis. Known to play a role, in vitro, in the folding of actin and tubulin. This chain is T-complex protein 1 subunit zeta 1, found in Arabidopsis thaliana (Mouse-ear cress).